We begin with the raw amino-acid sequence, 195 residues long: Probable nicotinate-nucleotide adenylyltransferase (195 aa).

It belongs to the NadD family.

It catalyses the reaction nicotinate beta-D-ribonucleotide + ATP + H(+) = deamido-NAD(+) + diphosphate. It participates in cofactor biosynthesis; NAD(+) biosynthesis; deamido-NAD(+) from nicotinate D-ribonucleotide: step 1/1. Catalyzes the reversible adenylation of nicotinate mononucleotide (NaMN) to nicotinic acid adenine dinucleotide (NaAD). This Mesorhizobium japonicum (strain LMG 29417 / CECT 9101 / MAFF 303099) (Mesorhizobium loti (strain MAFF 303099)) protein is Probable nicotinate-nucleotide adenylyltransferase.